The primary structure comprises 420 residues: Polymerase delta-interacting protein 3 (420 aa).

Ala2 carries the post-translational modification N-acetylalanine. Ser5 is subject to Phosphoserine. The residue at position 33 (Arg33) is an Omega-N-methylarginine. Ser127 bears the Phosphoserine mark. Thr140 is modified (phosphothreonine). Lys200 is covalently cross-linked (Glycyl lysine isopeptide (Lys-Gly) (interchain with G-Cter in SUMO2)). 2 positions are modified to phosphoserine: Ser215 and Ser217. Lys223 is covalently cross-linked (Glycyl lysine isopeptide (Lys-Gly) (interchain with G-Cter in SUMO2)). Ser244 is subject to Phosphoserine. Lys248 is covalently cross-linked (Glycyl lysine isopeptide (Lys-Gly) (interchain with G-Cter in SUMO2)). Residues 256–277 form a disordered region; that stretch reads TLVNKEEPPKELPPAEPVLSPL. Position 275 is a phosphoserine (Ser275). One can recognise an RRM domain in the interval 280-351; that stretch reads TKMTVNNLHP…QPMKCNLHMN (72 aa). Residues 369–394 form a disordered region; it reads PSVKKESELPRRGNPASSNPPAEVDP. Over residues 370 to 379 the composition is skewed to basic and acidic residues; it reads SVKKESELPR. Residue Lys372 forms a Glycyl lysine isopeptide (Lys-Gly) (interchain with G-Cter in SUMO2) linkage. Position 385 is a phosphoserine (Ser385). Residue Lys417 forms a Glycyl lysine isopeptide (Lys-Gly) (interchain with G-Cter in SUMO2) linkage.

Interacts with POLD2. Interacts with NCBP1 and EIF4A3. Associates with the multiprotein exon junction complex (EJC). Interacts with RPS6KB1 (activated). Interacts with ERH. Interacts with THOC2, DDX39B and ZC3H11A; the interactions are ATP-dependent and indicative for an association with the TREX complex.

It localises to the nucleus. Its subcellular location is the nucleus speckle. It is found in the cytoplasm. Functionally, is involved in regulation of translation. Is preferentially associated with CBC-bound spliced mRNA-protein complexes during the pioneer round of mRNA translation. Contributes to enhanced translational efficiency of spliced over nonspliced mRNAs. Recruits activated ribosomal protein S6 kinase beta-1 I/RPS6KB1 to newly synthesized mRNA. Involved in nuclear mRNA export; probably mediated by association with the TREX complex. The sequence is that of Polymerase delta-interacting protein 3 (Poldip3) from Mus musculus (Mouse).